Reading from the N-terminus, the 473-residue chain is Cell division protein FtsP (473 aa).

A signal peptide (tat-type signal) is located at residues 1-27; that stretch reads MSLSRRQFIQASGLAMCLGALPFAVQA.

Belongs to the FtsP family. Predicted to be exported by the Tat system. The position of the signal peptide cleavage has not been experimentally proven.

Its subcellular location is the periplasm. In terms of biological role, cell division protein that is required for growth during stress conditions. May be involved in protecting or stabilizing the divisomal assembly under conditions of stress. The polypeptide is Cell division protein FtsP (Xenorhabdus nematophila (strain ATCC 19061 / DSM 3370 / CCUG 14189 / LMG 1036 / NCIMB 9965 / AN6)).